Consider the following 481-residue polypeptide: Arginine biosynthesis bifunctional protein ArgJ, chloroplastic (481 aa).

The substrate site is built by Thr-225, Lys-251, Thr-262, Glu-349, Asn-476, and Thr-481. Thr-262 acts as the Nucleophile in catalysis.

Belongs to the ArgJ family. In terms of assembly, heterodimer of an alpha and a beta chain.

The protein localises to the plastid. The protein resides in the chloroplast. It carries out the reaction N(2)-acetyl-L-ornithine + L-glutamate = N-acetyl-L-glutamate + L-ornithine. It catalyses the reaction L-glutamate + acetyl-CoA = N-acetyl-L-glutamate + CoA + H(+). The protein operates within amino-acid biosynthesis; L-arginine biosynthesis; L-ornithine and N-acetyl-L-glutamate from L-glutamate and N(2)-acetyl-L-ornithine (cyclic): step 1/1. It participates in amino-acid biosynthesis; L-arginine biosynthesis; N(2)-acetyl-L-ornithine from L-glutamate: step 1/4. Its function is as follows. Catalyzes two activities which are involved in the cyclic version of arginine biosynthesis: the synthesis of acetylglutamate from glutamate and acetyl-CoA, and of ornithine by transacetylation between acetylornithine and glutamate. The sequence is that of Arginine biosynthesis bifunctional protein ArgJ, chloroplastic from Populus trichocarpa (Western balsam poplar).